Reading from the N-terminus, the 526-residue chain is Arp2/3 complex-activating protein rickA (526 aa).

A disordered region spans residues 305–356; that stretch reads TTSSIAKPLENNVTPPPPLTKNNIPPPPPPPPLSKNNILPPPPPPMPTMAPA. A compositionally biased stretch (pro residues) spans 318–352; sequence TPPPPLTKNNIPPPPPPPPLSKNNILPPPPPPMPT. WH2 domains are found at residues 383–400 and 410–427; these read DTSD…LRKV and SRDL…LRKV. Disordered regions lie at residues 425 to 452 and 464 to 526; these read RKVE…SKPN and MEMS…FVRS. The segment at 448 to 484 is central and acidic domains; that stretch reads VSKPNGVASILARRVAMEMSDSSSSSGSESDSGNWSD. Residues 464 to 480 show a composition bias toward low complexity; the sequence is MEMSDSSSSSGSESDSG. Composition is skewed to polar residues over residues 481–491 and 506–526; these read NWSDASVNSNK and TTHA…FVRS.

In terms of assembly, homodimer.

The protein resides in the cell surface. In terms of biological role, recruits and activates the Arp2/3 complex, which in turn leads to actin polymerization, promoting Rickettsia motility during infection. The protein is Arp2/3 complex-activating protein rickA (rickA) of Rickettsia felis (strain ATCC VR-1525 / URRWXCal2) (Rickettsia azadi).